We begin with the raw amino-acid sequence, 147 residues long: 3-dehydroquinate dehydratase (147 aa).

The Proton acceptor role is filled by Tyr-24. 3 residues coordinate substrate: Asn-75, His-81, and Asp-88. His-101 serves as the catalytic Proton donor. Residues 102–103 (IS) and Arg-112 contribute to the substrate site.

It belongs to the type-II 3-dehydroquinase family. Homododecamer.

It carries out the reaction 3-dehydroquinate = 3-dehydroshikimate + H2O. Its pathway is metabolic intermediate biosynthesis; chorismate biosynthesis; chorismate from D-erythrose 4-phosphate and phosphoenolpyruvate: step 3/7. Its function is as follows. Catalyzes a trans-dehydration via an enolate intermediate. The polypeptide is 3-dehydroquinate dehydratase (Cereibacter sphaeroides (strain ATCC 17023 / DSM 158 / JCM 6121 / CCUG 31486 / LMG 2827 / NBRC 12203 / NCIMB 8253 / ATH 2.4.1.) (Rhodobacter sphaeroides)).